Here is an 883-residue protein sequence, read N- to C-terminus: Valine--tRNA ligase (883 aa).

The short motif at 46-56 (PNVTGKLHLGH) is the 'HIGH' region element. The 'KMSKS' region signature appears at 520–524 (KMSKS). Position 523 (K523) interacts with ATP. Residues 809–844 (LADLLNVEEELARLEKELAKWQKELDMVGKKLSNER) are a coiled coil.

Belongs to the class-I aminoacyl-tRNA synthetase family. ValS type 1 subfamily. As to quaternary structure, monomer.

Its subcellular location is the cytoplasm. It catalyses the reaction tRNA(Val) + L-valine + ATP = L-valyl-tRNA(Val) + AMP + diphosphate. Catalyzes the attachment of valine to tRNA(Val). As ValRS can inadvertently accommodate and process structurally similar amino acids such as threonine, to avoid such errors, it has a 'posttransfer' editing activity that hydrolyzes mischarged Thr-tRNA(Val) in a tRNA-dependent manner. The polypeptide is Valine--tRNA ligase (Streptococcus thermophilus (strain CNRZ 1066)).